The primary structure comprises 1025 residues: Error-prone DNA polymerase (1025 aa).

Belongs to the DNA polymerase type-C family. DnaE2 subfamily.

Its subcellular location is the cytoplasm. The enzyme catalyses DNA(n) + a 2'-deoxyribonucleoside 5'-triphosphate = DNA(n+1) + diphosphate. Its function is as follows. DNA polymerase involved in damage-induced mutagenesis and translesion synthesis (TLS). It is not the major replicative DNA polymerase. This chain is Error-prone DNA polymerase, found in Pseudomonas fluorescens (strain Pf0-1).